The chain runs to 299 residues: Probable inactive heme oxygenase 2, chloroplastic (299 aa).

The segment covering 1-15 has biased composition (low complexity); it reads MASLLRPTPLLSTPR. Disordered stretches follow at residues 1–20, 45–70, and 96–126; these read MASLLRPTPLLSTPRKLTHS, LCRSTPTPSQQKASQRKRTRYRKQYP, and DLSEDKTDTEKEEEEEEEDDDDDDEVKEETW. Residues 1–83 constitute a chloroplast transit peptide; sequence MASLLRPTPL…IGITEEMRFV (83 aa). Residues 46–57 show a composition bias toward polar residues; the sequence is CRSTPTPSQQKA. Residues 58 to 67 show a composition bias toward basic residues; it reads SQRKRTRYRK. Acidic residues predominate over residues 105–122; the sequence is EKEEEEEEEDDDDDDEVK.

Belongs to the heme oxygenase family. As to expression, widely expressed at low levels.

It is found in the plastid. The protein localises to the chloroplast. In terms of biological role, probable inactive heme oxygenase. Binds protoporphyrin IX, a precursor for both heme and chlorophyll biosynthesis. Plays a minor role in phytochrome assembly and photomorphogenesis. The protein is Probable inactive heme oxygenase 2, chloroplastic (HO2) of Arabidopsis thaliana (Mouse-ear cress).